The chain runs to 416 residues: Transcription termination factor Rho (416 aa).

The 71-residue stretch at 51-121 (LIYSYGELDI…LKLIYVNGEK (71 aa)) folds into the Rho RNA-BD domain. Residues 162-167 (GKGQRG), 174-179 (KAGKTT), and Arg205 contribute to the ATP site.

This sequence belongs to the Rho family. As to quaternary structure, homohexamer. The homohexamer assembles into an open ring structure.

In terms of biological role, facilitates transcription termination by a mechanism that involves Rho binding to the nascent RNA, activation of Rho's RNA-dependent ATPase activity, and release of the mRNA from the DNA template. This Streptobacillus moniliformis (strain ATCC 14647 / DSM 12112 / NCTC 10651 / 9901) protein is Transcription termination factor Rho.